The sequence spans 93 residues: Peptide YY-like (93 aa).

Residues 1 to 27 form the signal peptide; sequence MVSPRVRLAALALSVCAILCLGMHASA. Residue Y63 is modified to Tyrosine amide. Positions 65-93 are cleaved as a propeptide — C-terminal extension; the sequence is KRALTPENWIYRDPAEERVTYGLDDYAMW.

This sequence belongs to the NPY family. In terms of tissue distribution, gut and medial reticulospinal neuron system in the brainstem.

It localises to the secreted. In terms of biological role, gastrointestinal hormone and neuropeptide. The polypeptide is Peptide YY-like (pyy) (Lampetra fluviatilis (European river lamprey)).